The following is an 801-amino-acid chain: Ent-copalyl diphosphate synthase, chloroplastic (801 aa).

Residue K241 coordinates substrate. Mg(2+) is bound by residues D373 and D375. Positions D373–D376 match the DXDD motif motif. Substrate is bound at residue K459.

The protein belongs to the terpene synthase family. The cofactor is Mg(2+).

The protein localises to the plastid. Its subcellular location is the chloroplast. It catalyses the reaction (2E,6E,10E)-geranylgeranyl diphosphate = ent-copalyl diphosphate. Its pathway is plant hormone biosynthesis; gibberellin biosynthesis. Catalyzes the conversion of geranylgeranyl diphosphate to the gibberellin precursor ent-copalyl diphosphate. This is Ent-copalyl diphosphate synthase, chloroplastic from Pisum sativum (Garden pea).